Consider the following 283-residue polypeptide: uncharacterized protein (283 aa).

The FAD-binding FR-type domain maps to 4–131; sequence RPLHAFEVVA…MGPGGAYAPD (128 aa).

This is an uncharacterized protein from Mycobacterium bovis (strain ATCC BAA-935 / AF2122/97).